We begin with the raw amino-acid sequence, 356 residues long: Butyrate kinase (356 aa).

It belongs to the acetokinase family.

It localises to the cytoplasm. It carries out the reaction butanoate + ATP = butanoyl phosphate + ADP. Its pathway is lipid metabolism; butanoate metabolism. Catalyzes the conversion of butyryl-CoA through butyryl phosphate to butyrate. The polypeptide is Butyrate kinase (Clostridium tetani (strain Massachusetts / E88)).